The following is a 597-amino-acid chain: Protein GRISEA (597 aa).

A DNA-binding region (copper-fist) is located at residues 1-41 (MPIINGQKMACGPCIRGHRSTKCNHYNERVMVPVRKPGRPL). Positions 11, 14, 23, and 25 each coordinate Zn(2+). Disordered regions lie at residues 70–115 (PAGT…ASRR), 233–352 (AFVD…PGFG), 407–428 (SRPP…NGNN), and 467–541 (SPNS…SPAL). The span at 92 to 103 (SPASRTSSNRVT) shows a compositional bias: polar residues. Over residues 104 to 115 (KSGSGSKSASRR) the composition is skewed to low complexity. A compositionally biased stretch (gly residues) spans 269 to 281 (GGSGGGGCCGGGK). Residues 287–314 (QAPPPVPAPLPTPPQQQMPNIMPPPQPQ) show a composition bias toward pro residues. A compositionally biased stretch (low complexity) spans 469–495 (NSSHGNSGSADSSANASPSANPLNLAS). Residues 521-530 (ANESDGSSNA) are compositionally biased toward polar residues.

The protein resides in the nucleus. In terms of biological role, copper-sensing transcription factor that regulates copper uptake by transactivation of Ctr3, a high affinity copper permease. Binds to the palindromic UAS sequence 5'-TGTTGCTCANNNNAGAGCAACT-3'. Also transactivates Sod2, a mitochondrial manganese superoxide dismutase through the palindromic UAS sequence 5'-GTTTGCTCA-3' with 352 bp separating the two inverted repeats. Loss of function indirectly leads to rearrangement of mitochondrial DNA associated with senescence in wild-type strains. The sequence is that of Protein GRISEA from Podospora anserina (Pleurage anserina).